Reading from the N-terminus, the 307-residue chain is Ribosomal RNA small subunit methyltransferase H (307 aa).

Residues 33–35 (GGY), D51, F78, D96, and Q103 each bind S-adenosyl-L-methionine.

The protein belongs to the methyltransferase superfamily. RsmH family.

The protein localises to the cytoplasm. The catalysed reaction is cytidine(1402) in 16S rRNA + S-adenosyl-L-methionine = N(4)-methylcytidine(1402) in 16S rRNA + S-adenosyl-L-homocysteine + H(+). Specifically methylates the N4 position of cytidine in position 1402 (C1402) of 16S rRNA. The chain is Ribosomal RNA small subunit methyltransferase H from Rickettsia conorii (strain ATCC VR-613 / Malish 7).